Reading from the N-terminus, the 67-residue chain is MPKMKTHRGAAKRFKKTGTGKLKRSHAYTSHMFRHKSQKQKRKLRKAAIVHSGDFKRIHQMLTYKKK.

The disordered stretch occupies residues 1-41; it reads MPKMKTHRGAAKRFKKTGTGKLKRSHAYTSHMFRHKSQKQK.

Belongs to the bacterial ribosomal protein bL35 family.

This is Large ribosomal subunit protein bL35 from Shouchella clausii (strain KSM-K16) (Alkalihalobacillus clausii).